A 155-amino-acid polypeptide reads, in one-letter code: Ribosomal RNA large subunit methyltransferase H (155 aa).

S-adenosyl-L-methionine is bound by residues Leu-72, Gly-103, and 122–127; that span reads LSPLTL.

Belongs to the RNA methyltransferase RlmH family. In terms of assembly, homodimer.

Its subcellular location is the cytoplasm. The enzyme catalyses pseudouridine(1915) in 23S rRNA + S-adenosyl-L-methionine = N(3)-methylpseudouridine(1915) in 23S rRNA + S-adenosyl-L-homocysteine + H(+). In terms of biological role, specifically methylates the pseudouridine at position 1915 (m3Psi1915) in 23S rRNA. This is Ribosomal RNA large subunit methyltransferase H from Aeromonas hydrophila subsp. hydrophila (strain ATCC 7966 / DSM 30187 / BCRC 13018 / CCUG 14551 / JCM 1027 / KCTC 2358 / NCIMB 9240 / NCTC 8049).